Consider the following 289-residue polypeptide: BTB/POZ domain-containing protein KCTD7 (289 aa).

A compositionally biased stretch (polar residues) spans 1-10; that stretch reads MVVVTGQSKG. The disordered stretch occupies residues 1–35; the sequence is MVVVTGQSKGSGDPDEAMSSSDAEDDFQEPATPTA. The BTB domain occupies 51–149; sequence EVVPLNVGGM…HLEDVQPLKG (99 aa).

Its subcellular location is the cell membrane. It is found in the cytoplasm. The protein localises to the cytosol. Functionally, may be involved in the control of excitability of cortical neurons. This chain is BTB/POZ domain-containing protein KCTD7 (KCTD7), found in Gallus gallus (Chicken).